The sequence spans 227 residues: uncharacterized protein (227 aa).

The protein belongs to the flavoredoxin family. Requires FMN as cofactor.

This is an uncharacterized protein from Deinococcus radiodurans (strain ATCC 13939 / DSM 20539 / JCM 16871 / CCUG 27074 / LMG 4051 / NBRC 15346 / NCIMB 9279 / VKM B-1422 / R1).